Reading from the N-terminus, the 319-residue chain is tRNA uridine(34) hydroxylase (319 aa).

The 95-residue stretch at 127–221 folds into the Rhodanese domain; that stretch reads KQEDTVIIDA…YGKDPEVQGE (95 aa). Cys181 functions as the Cysteine persulfide intermediate in the catalytic mechanism.

The protein belongs to the TrhO family.

The enzyme catalyses uridine(34) in tRNA + AH2 + O2 = 5-hydroxyuridine(34) in tRNA + A + H2O. In terms of biological role, catalyzes oxygen-dependent 5-hydroxyuridine (ho5U) modification at position 34 in tRNAs. The protein is tRNA uridine(34) hydroxylase of Bacillus cereus (strain Q1).